We begin with the raw amino-acid sequence, 106 residues long: MSKNFEWITPDSDLLEKEITQIQPPKKYNVVLNNDDYTPMDFVIDVLERFFSHDLDKATQIMLKVHYEGKAICGTYSAEIAETKVAQVTMYSRENEHPLLCTMEQA.

This sequence belongs to the ClpS family. Binds to the N-terminal domain of the chaperone ClpA.

Its function is as follows. Involved in the modulation of the specificity of the ClpAP-mediated ATP-dependent protein degradation. This is ATP-dependent Clp protease adapter protein ClpS from Vibrio vulnificus (strain CMCP6).